The primary structure comprises 153 residues: Phosphatase NudJ (153 aa).

The Nudix hydrolase domain occupies 3–131; the sequence is KPHVTVACVV…LVAESIRCYQ (129 aa). The Nudix box signature appears at 36 to 57; that stretch reads GHLEADETLVEAAARELWEETG.

The protein belongs to the Nudix hydrolase family. NudJ subfamily. As to quaternary structure, monomer. Requires Mg(2+) as cofactor.

This Escherichia coli O139:H28 (strain E24377A / ETEC) protein is Phosphatase NudJ (nudJ).